The primary structure comprises 463 residues: Probable multidrug resistance protein YoeA (463 aa).

Transmembrane regions (helical) follow at residues 24–44 (LFLV…LVGM), 56–76 (VAAV…TIGI), 106–126 (FTFL…LDIL), 143–163 (ARIL…TTFL), 177–197 (IVST…MFGF), 202–222 (IYGS…VLMV), 256–276 (VPAS…ISFV), 293–313 (VASY…IFAA), 330–350 (VGIW…YVFS), 370–390 (LLMI…ISAT), 397–417 (VLWP…PVAF), and 427–447 (ILGV…LIYG).

Belongs to the multi antimicrobial extrusion (MATE) (TC 2.A.66.1) family.

Its subcellular location is the cell membrane. The chain is Probable multidrug resistance protein YoeA (yoeA) from Bacillus subtilis (strain 168).